The primary structure comprises 318 residues: MASQYQLEFEKPVFELEQKIQELADIAGDNVELKTEVVKLEKKVDKMREVIFANLSRWQMVQVARHIDRPFTLDYLTHIFTDFVELHGDRLFGDDHAIVGGMAKLDGEPVMVIGHQKGRDTKEKVYRNFGMPNPEGYRKALRLMEMAERFRMPIITFVDTPGAYPGIGAEERGQAEAIARNLREMAALTVPIIVVITGEGGSGGALAIAVGDRVLMLEYSIYAVISPEGCAAILWSDGTKGAQAAEALKLTAPDLKELDVIDEIVKEPLGGAHRDHETMAKNLHEALARHLKELKALSVEQLVEGRYQKFRKMSRFAE.

A CoA carboxyltransferase C-terminal domain is found at 39–293 (KLEKKVDKMR…HEALARHLKE (255 aa)).

The protein belongs to the AccA family. In terms of assembly, acetyl-CoA carboxylase is a heterohexamer composed of biotin carboxyl carrier protein (AccB), biotin carboxylase (AccC) and two subunits each of ACCase subunit alpha (AccA) and ACCase subunit beta (AccD).

The protein resides in the cytoplasm. It catalyses the reaction N(6)-carboxybiotinyl-L-lysyl-[protein] + acetyl-CoA = N(6)-biotinyl-L-lysyl-[protein] + malonyl-CoA. The protein operates within lipid metabolism; malonyl-CoA biosynthesis; malonyl-CoA from acetyl-CoA: step 1/1. In terms of biological role, component of the acetyl coenzyme A carboxylase (ACC) complex. First, biotin carboxylase catalyzes the carboxylation of biotin on its carrier protein (BCCP) and then the CO(2) group is transferred by the carboxyltransferase to acetyl-CoA to form malonyl-CoA. In Geobacter metallireducens (strain ATCC 53774 / DSM 7210 / GS-15), this protein is Acetyl-coenzyme A carboxylase carboxyl transferase subunit alpha.